We begin with the raw amino-acid sequence, 160 residues long: Phosphopantetheine adenylyltransferase (160 aa).

Thr9 serves as a coordination point for substrate. ATP-binding positions include 9 to 10 (TF) and His17. Substrate is bound by residues Lys41, Leu73, and Arg87. Residues 88 to 90 (GLR), Glu98, and 123 to 129 (FSYTSSS) each bind ATP.

It belongs to the bacterial CoaD family. As to quaternary structure, homohexamer. Mg(2+) serves as cofactor.

The protein resides in the cytoplasm. It carries out the reaction (R)-4'-phosphopantetheine + ATP + H(+) = 3'-dephospho-CoA + diphosphate. It functions in the pathway cofactor biosynthesis; coenzyme A biosynthesis; CoA from (R)-pantothenate: step 4/5. Functionally, reversibly transfers an adenylyl group from ATP to 4'-phosphopantetheine, yielding dephospho-CoA (dPCoA) and pyrophosphate. This is Phosphopantetheine adenylyltransferase from Opitutus terrae (strain DSM 11246 / JCM 15787 / PB90-1).